We begin with the raw amino-acid sequence, 88 residues long: FAD assembly factor SdhE (88 aa).

This sequence belongs to the SdhE FAD assembly factor family. In terms of assembly, monomer. Makes weak or transient interactions with SdhA. Interacts with YgfX. Interacts with FrdA.

The protein localises to the cytoplasm. It participates in antibiotic biosynthesis; prodigiosin biosynthesis. Its function is as follows. An FAD assembly protein, which accelerates covalent attachment of the cofactor into other proteins. Plays an essential role in the assembly of succinate dehydrogenase (SDH, respiratory complex II), an enzyme complex that is a component of both the tricarboxylic acid cycle and the electron transport chain, and which couples the oxidation of succinate to fumarate with the reduction of ubiquinone (coenzyme Q) to ubiquinol. Required for flavinylation (covalent attachment of FAD) of the flavoprotein subunit SdhA of SDH. Required for flavinylation of the flavoprotein subunit FrdA of fumarate reductase (FRD). Flavinylation of SDH and FRD occurs in a similar but not identical manner, as site-specific mutations display subtle differences between them. Flavinylates SdhA in vivo in the absence of the other SDH subunits; SdhE mutants that do not flavinylate also interfere with wild-type activity in a possible dominant-negative fashion. Weakly binds to FAD and facilitates its binding to SdhA. Required for production of prodigiosin antibiotic (Pig); overproduction of SdhE in a deletion mutant leads to decreased synthesis of Pig compared to wild-type. Capable of flavinylating A.pasteurianus SdhA when the SDH operon and this gene are expressed in G.oxydans; flavinylation of SdhA is detected only in the presence of sdhE. The sequence is that of FAD assembly factor SdhE from Serratia sp. (strain ATCC 39006) (Prodigiosinella confusarubida).